We begin with the raw amino-acid sequence, 437 residues long: Glutamyl-tRNA reductase (437 aa).

Substrate-binding positions include 49–52, S109, 114–116, and Q120; these read TCNR and EVQ. The active-site Nucleophile is C50. 189-194 lines the NADP(+) pocket; the sequence is GAGDTA.

The protein belongs to the glutamyl-tRNA reductase family. Homodimer.

The enzyme catalyses (S)-4-amino-5-oxopentanoate + tRNA(Glu) + NADP(+) = L-glutamyl-tRNA(Glu) + NADPH + H(+). The protein operates within porphyrin-containing compound metabolism; protoporphyrin-IX biosynthesis; 5-aminolevulinate from L-glutamyl-tRNA(Glu): step 1/2. Its pathway is porphyrin-containing compound metabolism; chlorophyll biosynthesis. In terms of biological role, catalyzes the NADPH-dependent reduction of glutamyl-tRNA(Glu) to glutamate 1-semialdehyde (GSA). The protein is Glutamyl-tRNA reductase of Chloroherpeton thalassium (strain ATCC 35110 / GB-78).